The sequence spans 188 residues: Succinate-acetate/proton symporter SatP (188 aa).

Residues 1-13 lie on the Cytoplasmic side of the membrane; the sequence is MGNTKLANPAPLG. Residues 14-34 form a helical membrane-spanning segment; that stretch reads LMGFGMTTILLNLHNVGYFAL. Asp35 is a topological domain (periplasmic). Residues 36–56 traverse the membrane as a helical segment; it reads GIILAMGIFYGGIAQIFAGLL. Topologically, residues 57 to 63 are cytoplasmic; sequence EYKKGNT. Residues 64 to 84 form a helical membrane-spanning segment; it reads FGLTAFTSYGSFWLTLVAILL. The Periplasmic segment spans residues 85-97; that stretch reads MPKLGLTDAPNAQ. The chain crosses the membrane as a helical span at residues 98–118; sequence FLGVYLGLWGVFTLFMFFGTL. Topologically, residues 119 to 122 are cytoplasmic; sequence KGAR. A helical membrane pass occupies residues 123–143; it reads VLQFVFFSLTVLFALLAIGNI. Over 144–148 the chain is Periplasmic; the sequence is AGNAA. A helical membrane pass occupies residues 149–169; sequence IIHFAGWIGLICGASAIYLAM. Residues 170–188 lie on the Cytoplasmic side of the membrane; the sequence is GEVLNEQFGRTVLPIGESH.

Belongs to the acetate uptake transporter (AceTr) (TC 2.A.96) family.

It is found in the cell inner membrane. Uptake of acetate and succinate. Transport is energetically dependent on the protonmotive force. The sequence is that of Succinate-acetate/proton symporter SatP (satP) from Escherichia coli O157:H7.